Reading from the N-terminus, the 115-residue chain is ATP synthase subunit g, mitochondrial (115 aa).

Met1 is subject to N-acetylmethionine. Phosphoserine is present on residues Ser3 and Ser62.

It belongs to the ATPase g subunit family. As to quaternary structure, F-type ATPases have 2 components, CF(1) - the catalytic core - and CF(0) - the membrane proton channel. In yeast, the dimeric form of ATP synthase consists of 17 polypeptides: alpha, beta, gamma, delta, epsilon, 4 (B), 5 (OSCP), 6 (A), 8, 9 (C), d, E (Tim11), f, g, h, i/j and k. In terms of processing, phosphorylation on Ser-62 impairs ATP synthase dimerization.

It localises to the mitochondrion membrane. Functionally, mitochondrial membrane ATP synthase (F(1)F(0) ATP synthase or Complex V) produces ATP from ADP in the presence of a proton gradient across the membrane which is generated by electron transport complexes of the respiratory chain. F-type ATPases consist of two structural domains, F(1) - containing the extramembraneous catalytic core, and F(0) - containing the membrane proton channel, linked together by a central stalk and a peripheral stalk. During catalysis, ATP synthesis in the catalytic domain of F(1) is coupled via a rotary mechanism of the central stalk subunits to proton translocation. Part of the complex F(0) domain. Minor subunit located with subunit a in the membrane. This Saccharomyces cerevisiae (strain ATCC 204508 / S288c) (Baker's yeast) protein is ATP synthase subunit g, mitochondrial (ATP20).